Consider the following 499-residue polypeptide: Trichoplein keratin filament-binding protein (499 aa).

3 coiled-coil regions span residues 17-143 (LEQQ…LYEQ), 169-304 (EQIT…LSAL), and 405-485 (NRER…TQRG). Residues 260 to 426 (RKMEQCRKKT…RQFTSREKKQ (167 aa)) form a trichohyalin/plectin homology domain region.

The protein belongs to the TCHP family.

The protein resides in the cytoplasm. It localises to the cytoskeleton. Its subcellular location is the microtubule organizing center. It is found in the centrosome. Its function is as follows. May act as a 'capping' or 'branching' protein for keratin filaments in the cell periphery. May regulate K8/K18 filament and desmosome organization mainly at the apical or peripheral regions of simple epithelial cells. The sequence is that of Trichoplein keratin filament-binding protein from Xenopus laevis (African clawed frog).